A 223-amino-acid chain; its full sequence is UPF0758 protein Cvib_1178 (223 aa).

Positions 100–222 (KIQGARDVYE…WYSFRENNQL (123 aa)) constitute an MPN domain. 3 residues coordinate Zn(2+): histidine 171, histidine 173, and aspartate 184. The JAMM motif signature appears at 171–184 (HNHPSGDTEPSNAD).

Belongs to the UPF0758 family.

The protein is UPF0758 protein Cvib_1178 of Chlorobium phaeovibrioides (strain DSM 265 / 1930) (Prosthecochloris vibrioformis (strain DSM 265)).